An 828-amino-acid polypeptide reads, in one-letter code: Leucine--tRNA ligase (828 aa).

The 'HIGH' region motif lies at 42 to 52 (PYPSGTLHVGH). A 'KMSKS' region motif is present at residues 582–586 (KMSKS). Lys585 contacts ATP.

The protein belongs to the class-I aminoacyl-tRNA synthetase family.

The protein localises to the cytoplasm. The catalysed reaction is tRNA(Leu) + L-leucine + ATP = L-leucyl-tRNA(Leu) + AMP + diphosphate. This chain is Leucine--tRNA ligase, found in Petrotoga mobilis (strain DSM 10674 / SJ95).